A 1383-amino-acid polypeptide reads, in one-letter code: DNA-directed RNA polymerase subunit beta (1383 aa).

It belongs to the RNA polymerase beta chain family. As to quaternary structure, the RNAP catalytic core consists of 2 alpha, 1 beta, 1 beta' and 1 omega subunit. When a sigma factor is associated with the core the holoenzyme is formed, which can initiate transcription.

The enzyme catalyses RNA(n) + a ribonucleoside 5'-triphosphate = RNA(n+1) + diphosphate. Its function is as follows. DNA-dependent RNA polymerase catalyzes the transcription of DNA into RNA using the four ribonucleoside triphosphates as substrates. This chain is DNA-directed RNA polymerase subunit beta, found in Xanthomonas axonopodis pv. citri (strain 306).